A 209-amino-acid chain; its full sequence is Large ribosomal subunit protein uL3 (209 aa).

Q150 carries the post-translational modification N5-methylglutamine.

This sequence belongs to the universal ribosomal protein uL3 family. In terms of assembly, part of the 50S ribosomal subunit. Forms a cluster with proteins L14 and L19. Methylated by PrmB.

In terms of biological role, one of the primary rRNA binding proteins, it binds directly near the 3'-end of the 23S rRNA, where it nucleates assembly of the 50S subunit. This chain is Large ribosomal subunit protein uL3, found in Pasteurella multocida (strain Pm70).